Here is a 415-residue protein sequence, read N- to C-terminus: Acetyl-CoA acetyltransferase 1 (415 aa).

Cys-99 serves as the catalytic Acyl-thioester intermediate. Lys-239 contacts CoA. Residue Ala-256 participates in K(+) binding. Ser-260 provides a ligand contact to CoA. Residue Val-357 participates in K(+) binding. Residues His-361 and Cys-391 each act as proton acceptor in the active site.

This sequence belongs to the thiolase-like superfamily. Thiolase family. Expressed in the vascular system of roots, cotyledons, young leaves, fully expanded leaves, stems, flowers, and funiculi of siliques.

The protein localises to the cytoplasm. It is found in the peroxisome. It catalyses the reaction 2 acetyl-CoA = acetoacetyl-CoA + CoA. It functions in the pathway metabolic intermediate biosynthesis; (R)-mevalonate biosynthesis; (R)-mevalonate from acetyl-CoA: step 1/3. In terms of biological role, catalyzes the condensation of two molecules of acetyl-CoA to produce acetoacetyl-CoA. In Arabidopsis thaliana (Mouse-ear cress), this protein is Acetyl-CoA acetyltransferase 1.